A 47-amino-acid chain; its full sequence is Ribosome-inactivating protein luffin P1 (47 aa).

2 disulfides stabilise this stretch: C12/C33 and C16/C29.

Homotetramer.

It catalyses the reaction Endohydrolysis of the N-glycosidic bond at one specific adenosine on the 28S rRNA.. Inhibits protein synthesis in animal cells. This chain is Ribosome-inactivating protein luffin P1, found in Luffa aegyptiaca (Sponge gourd).